The chain runs to 503 residues: Aminoaldehyde dehydrogenase 1, peroxisomal (503 aa).

Na(+)-binding residues include N27, I28, D99, and L189. Residue 238–245 coordinates NAD(+); sequence GSSATGSK. E260 functions as the Proton acceptor in the catalytic mechanism. Residues C294 and E393 each coordinate NAD(+). The active-site Nucleophile is C294. Positions 501–503 match the Microbody targeting signal motif; the sequence is SKL.

Belongs to the aldehyde dehydrogenase family. Forms homodimers.

It localises to the peroxisome. The catalysed reaction is 3-aminopropanal + NAD(+) + H2O = beta-alanine + NADH + 2 H(+). The enzyme catalyses 4-aminobutanal + NAD(+) + H2O = 4-aminobutanoate + NADH + 2 H(+). It carries out the reaction 4-guanidinobutanal + NAD(+) + H2O = 4-guanidinobutanoate + NADH + 2 H(+). The protein operates within amine and polyamine biosynthesis; betaine biosynthesis via choline pathway; betaine from betaine aldehyde: step 1/1. Functionally, dehydrogenase that catalyzes the oxidation of several aminoaldehydes. Metabolizes and detoxifies aldehyde products of polyamine degradation to non-toxic amino acids. Catalyzes the oxidation of 3-aminopropanal to beta-alanine. Catalyzes the oxidation of 4-aminobutanal to 4-aminobutanoate. Catalyzes the oxidation of 4-guanidinobutanal to 4-guanidinobutanoate. This is Aminoaldehyde dehydrogenase 1, peroxisomal from Pisum sativum (Garden pea).